The sequence spans 642 residues: Chaperone protein DnaK (642 aa).

Threonine 198 carries the post-translational modification Phosphothreonine; by autocatalysis. The tract at residues 602-642 is disordered; that stretch reads AYAKMTEKQQSDDGAGTQNADHKEDDVVDADFEEVKSDKKD.

The protein belongs to the heat shock protein 70 family.

Its function is as follows. Acts as a chaperone. The protein is Chaperone protein DnaK of Dichelobacter nodosus (strain VCS1703A).